A 148-amino-acid chain; its full sequence is Probable 4-amino-4-deoxy-L-arabinose-phosphoundecaprenol flippase subunit ArnF (148 aa).

Topologically, residues 1-23 (MRGDNTGVGKEPAVTERPAIKGY) are cytoplasmic. A helical membrane pass occupies residues 24–44 (LYVLGSILLVTLAQLAMKWGV). At 45 to 63 (MQLPAWQASLDIMLAHPVP) the chain is on the periplasmic side. Residues 64–84 (LLVITAGVGCYALSLLCWLAA) form a helical membrane-spanning segment. At 85–91 (LHFTPLN) the chain is on the cytoplasmic side. The chain crosses the membrane as a helical span at residues 92-112 (IAYPLLSTSYALVYLLAVSIP). The Periplasmic portion of the chain corresponds to 113-117 (SFAEP). The chain crosses the membrane as a helical span at residues 118–138 (LEPGKAVGVIFILLGAVLVGI). Over 139-148 (KPVGRKRNAH) the chain is Cytoplasmic.

Belongs to the ArnF family. In terms of assembly, heterodimer of ArnE and ArnF.

The protein resides in the cell inner membrane. The protein operates within bacterial outer membrane biogenesis; lipopolysaccharide biosynthesis. In terms of biological role, translocates 4-amino-4-deoxy-L-arabinose-phosphoundecaprenol (alpha-L-Ara4N-phosphoundecaprenol) from the cytoplasmic to the periplasmic side of the inner membrane. This Aeromonas salmonicida (strain A449) protein is Probable 4-amino-4-deoxy-L-arabinose-phosphoundecaprenol flippase subunit ArnF.